The following is a 131-amino-acid chain: UPF0212 protein TK1194 (131 aa).

Belongs to the UPF0212 family.

This is UPF0212 protein TK1194 from Thermococcus kodakarensis (strain ATCC BAA-918 / JCM 12380 / KOD1) (Pyrococcus kodakaraensis (strain KOD1)).